A 389-amino-acid chain; its full sequence is tRNA-specific 2-thiouridylase MnmA (389 aa).

Residues 33–40 (GLSGGVDS) and leucine 59 each bind ATP. Catalysis depends on cysteine 120, which acts as the Nucleophile. A disulfide bond links cysteine 120 and cysteine 219. Position 145 (glycine 145) interacts with ATP. Positions 169–171 (KDQ) are interaction with tRNA. Catalysis depends on cysteine 219, which acts as the Cysteine persulfide intermediate. Positions 326–327 (RY) are interaction with tRNA.

The protein belongs to the MnmA/TRMU family.

The protein localises to the cytoplasm. The enzyme catalyses S-sulfanyl-L-cysteinyl-[protein] + uridine(34) in tRNA + AH2 + ATP = 2-thiouridine(34) in tRNA + L-cysteinyl-[protein] + A + AMP + diphosphate + H(+). In terms of biological role, catalyzes the 2-thiolation of uridine at the wobble position (U34) of tRNA, leading to the formation of s(2)U34. The polypeptide is tRNA-specific 2-thiouridylase MnmA (Synechococcus sp. (strain WH7803)).